The chain runs to 82 residues: Penaeidin-3e (82 aa).

An N-terminal signal peptide occupies residues 1-19 (MRLVVCLVFLAPFALVCHG). Position 20 is a pyrrolidone carboxylic acid (Gln-20). 3 disulfide bridges follow: Cys-51/Cys-66, Cys-55/Cys-73, and Cys-67/Cys-74. Ser-81 carries the post-translational modification Serine amide.

This sequence belongs to the penaeidin family.

It is found in the cytoplasmic granule. Antibacterial and antifungal activity. Presents chitin-binding activity. The protein is Penaeidin-3e of Penaeus vannamei (Whiteleg shrimp).